Consider the following 197-residue polypeptide: Proteasome subunit beta 1 (197 aa).

Residues 1 to 6 constitute a propeptide, removed in mature form; by autocatalysis; sequence MNRKTG. Thr7 functions as the Nucleophile in the catalytic mechanism.

This sequence belongs to the peptidase T1B family. In terms of assembly, the 20S proteasome core is composed of 14 alpha and 14 beta subunits that assemble into four stacked heptameric rings, resulting in a barrel-shaped structure. The two inner rings, each composed of seven catalytic beta subunits, are sandwiched by two outer rings, each composed of seven alpha subunits. The catalytic chamber with the active sites is on the inside of the barrel. Has a gated structure, the ends of the cylinder being occluded by the N-termini of the alpha-subunits. Is capped at one or both ends by the proteasome regulatory ATPase, PAN.

The protein localises to the cytoplasm. The catalysed reaction is Cleavage of peptide bonds with very broad specificity.. The formation of the proteasomal ATPase PAN-20S proteasome complex, via the docking of the C-termini of PAN into the intersubunit pockets in the alpha-rings, triggers opening of the gate for substrate entry. Interconversion between the open-gate and close-gate conformations leads to a dynamic regulation of the 20S proteasome proteolysis activity. Component of the proteasome core, a large protease complex with broad specificity involved in protein degradation. The polypeptide is Proteasome subunit beta 1 (Pyrococcus abyssi (strain GE5 / Orsay)).